The primary structure comprises 103 residues: Large ribosomal subunit protein bL21 (103 aa).

It belongs to the bacterial ribosomal protein bL21 family. In terms of assembly, part of the 50S ribosomal subunit. Contacts protein L20.

This protein binds to 23S rRNA in the presence of protein L20. The protein is Large ribosomal subunit protein bL21 of Shewanella woodyi (strain ATCC 51908 / MS32).